The sequence spans 469 residues: UDP-N-acetylmuramoylalanine--D-glutamate ligase (469 aa).

Gly-123–Thr-129 lines the ATP pocket.

The protein belongs to the MurCDEF family.

It localises to the cytoplasm. It catalyses the reaction UDP-N-acetyl-alpha-D-muramoyl-L-alanine + D-glutamate + ATP = UDP-N-acetyl-alpha-D-muramoyl-L-alanyl-D-glutamate + ADP + phosphate + H(+). It participates in cell wall biogenesis; peptidoglycan biosynthesis. Cell wall formation. Catalyzes the addition of glutamate to the nucleotide precursor UDP-N-acetylmuramoyl-L-alanine (UMA). The protein is UDP-N-acetylmuramoylalanine--D-glutamate ligase of Caulobacter sp. (strain K31).